A 457-amino-acid chain; its full sequence is MLSLYNTLTRQKEAFKPIEPGKVSMYVCGMTVYDLCHIGHARMLAAFDVIYRWLKASGYDVNYVRNITDIEDKIIKRALERGITPEQLVEETIADMRQDAAALGLLPPTHEPRATHHVGGMVAMIEQLIANGKAYPAANGDVYYAVREFEGYGKLSGRTLDKLRAGERVEVDPNKRDPLDFVLWKAAKPGEPSWDSPWGKGRPGWHIECSVMSCHHLGEHFDIHGGGEDLQFPHHENEIAQSEGAHGHQYVNYWLHNGFINVDGEKMSKSLGNFFTIRDVLQHFDGEVIRFFIVRSHYRSPVNYTDSILNDAKHGLTRLYTALRGIELPTSDGIDWNHAYAARFKAAMDDDFGTSEAVAVLFELAGEVNKSRDPQLARLLKDLGGVLGLLTRDPEVFLQGGVGEGELSAEQVEALIQARKDARAAKDWAESDRIRDELTAKGIVLEDGAGGTIWRRA.

Position 28 (C28) interacts with Zn(2+). Residues M30–H40 carry the 'HIGH' region motif. Zn(2+) is bound by residues C209, H234, and E238. A 'KMSKS' region motif is present at residues K266–S270. Residue K269 participates in ATP binding.

It belongs to the class-I aminoacyl-tRNA synthetase family. As to quaternary structure, monomer. Requires Zn(2+) as cofactor.

The protein resides in the cytoplasm. The catalysed reaction is tRNA(Cys) + L-cysteine + ATP = L-cysteinyl-tRNA(Cys) + AMP + diphosphate. The chain is Cysteine--tRNA ligase from Chromobacterium violaceum (strain ATCC 12472 / DSM 30191 / JCM 1249 / CCUG 213 / NBRC 12614 / NCIMB 9131 / NCTC 9757 / MK).